The primary structure comprises 1009 residues: Type VII secretion system accessory factor EsaA (1009 aa).

A run of 6 helical transmembrane segments spans residues 7–27, 822–842, 869–889, 903–923, 928–948, and 979–999; these read IYAL…IFFV, ISPT…AYIF, AITS…VGLI, KFIL…TYLL, SIGM…MNNL, and IGLA…LNMF.

This sequence belongs to the EsaA family. In terms of assembly, homodimer. Interacts with EssB.

It localises to the cell membrane. Component of the type VII secretion system (Ess). Provides together with EssB and other components such as EssC and EssE a secretion platform across the cytoplasmic membrane in the host. The polypeptide is Type VII secretion system accessory factor EsaA (Staphylococcus aureus (strain MRSA252)).